A 373-amino-acid polypeptide reads, in one-letter code: Dual-specificity RNA methyltransferase RlmN (373 aa).

The active-site Proton acceptor is Glu-94. The 240-residue stretch at 100–339 (EEDRATLCVS…VIVRKTRGDD (240 aa)) folds into the Radical SAM core domain. An intrachain disulfide couples Cys-107 to Cys-344. Residues Cys-114, Cys-118, and Cys-121 each contribute to the [4Fe-4S] cluster site. Residues 168-169 (GE), Ser-200, 222-224 (SIH), and Asn-301 contribute to the S-adenosyl-L-methionine site. The active-site S-methylcysteine intermediate is the Cys-344.

The protein belongs to the radical SAM superfamily. RlmN family. Requires [4Fe-4S] cluster as cofactor.

It localises to the cytoplasm. The catalysed reaction is adenosine(2503) in 23S rRNA + 2 reduced [2Fe-2S]-[ferredoxin] + 2 S-adenosyl-L-methionine = 2-methyladenosine(2503) in 23S rRNA + 5'-deoxyadenosine + L-methionine + 2 oxidized [2Fe-2S]-[ferredoxin] + S-adenosyl-L-homocysteine. It carries out the reaction adenosine(37) in tRNA + 2 reduced [2Fe-2S]-[ferredoxin] + 2 S-adenosyl-L-methionine = 2-methyladenosine(37) in tRNA + 5'-deoxyadenosine + L-methionine + 2 oxidized [2Fe-2S]-[ferredoxin] + S-adenosyl-L-homocysteine. Functionally, specifically methylates position 2 of adenine 2503 in 23S rRNA and position 2 of adenine 37 in tRNAs. m2A2503 modification seems to play a crucial role in the proofreading step occurring at the peptidyl transferase center and thus would serve to optimize ribosomal fidelity. The chain is Dual-specificity RNA methyltransferase RlmN from Shewanella frigidimarina (strain NCIMB 400).